A 564-amino-acid polypeptide reads, in one-letter code: NAC domain-containing protein 16 (564 aa).

The 151-residue stretch at 16–166 folds into the NAC domain; it reads SAPGFRFHPT…YYALYKLYKK (151 aa). A DNA-binding region spans residues 115-172; sequence VGLKKTLVFYRGRAPNGERTDWVMHEYTMDEEELGRCKNAKEYYALYKLYKKSGAGPK. The helical transmembrane segment at 535–555 threads the bilayer; it reads FLLLSIMGALCAIFWVFKATV.

In terms of tissue distribution, expressed in roots, rosette leaves, shoot apex, stems and flowers.

Its subcellular location is the membrane. The protein resides in the nucleus. Functionally, transcriptional activator activated by proteolytic cleavage through regulated intramembrane proteolysis (RIP). Transcriptional activator that promotes leaf senescence by up-regulating senescence-associated genes in response to developmental and stress-induced senescence signals. Functions in salt and oxidative stress-responsive signaling pathways. Binds to the promoter of NAC029/NAP and NAC059/ORS1 genes. The chain is NAC domain-containing protein 16 from Arabidopsis thaliana (Mouse-ear cress).